Reading from the N-terminus, the 273-residue chain is MALKNFNPITPSLRELVQVDKTSLWKGRPLKSLTKGISKTGGRNNQGKITSWHRGGGHKKLYRIIDFKRNKIDVSAIVERIEYDPNRTAFIALIKYEDGEYSYILAPQKLSVGDRVISSQDADIKIGNCLPLKCIPIGTTLHNVEMKVGKGGQIARSAGTSVDLVGKDSGYAQIKLRSGEFRLVPLDCKATIGSISNPDQKNINLGKAGRNRWLGWRPHVRGVAMNPVDHPHGGGEGKTSGGRHPVTPWGFPTKGKKTRKNKRTSKFIVKKRK.

The tract at residues 228–273 (VDHPHGGGEGKTSGGRHPVTPWGFPTKGKKTRKNKRTSKFIVKKRK) is disordered. Over residues 254–273 (KGKKTRKNKRTSKFIVKKRK) the composition is skewed to basic residues.

This sequence belongs to the universal ribosomal protein uL2 family. As to quaternary structure, part of the 50S ribosomal subunit. Forms a bridge to the 30S subunit in the 70S ribosome.

One of the primary rRNA binding proteins. Required for association of the 30S and 50S subunits to form the 70S ribosome, for tRNA binding and peptide bond formation. It has been suggested to have peptidyltransferase activity; this is somewhat controversial. Makes several contacts with the 16S rRNA in the 70S ribosome. This is Large ribosomal subunit protein uL2 from Rickettsia peacockii (strain Rustic).